The chain runs to 493 residues: Phospholipid transfer protein (493 aa).

Positions 1–17 are cleaved as a signal peptide; that stretch reads MVLLWALFLALLAGAHA. 5 N-linked (GlcNAc...) asparagine glycosylation sites follow: Asn64, Asn91, Asn94, Asn117, and Asn143. A disulfide bond links Cys146 and Cys185. N-linked (GlcNAc...) asparagine glycosylation is found at Asn245 and Asn398.

The protein belongs to the BPI/LBP/Plunc superfamily. BPI/LBP family. In terms of processing, glycosylation is necessary for secretion and its phospholipid transfer activity. Highest level expression in the lung, brain and heart with relatively low levels in the liver, skeletal muscle and testis and very low levels found in the spleen and kidney.

The protein localises to the secreted. Its subcellular location is the nucleus. It catalyses the reaction a 1,2-diacyl-sn-glycero-3-phosphocholine(in) = a 1,2-diacyl-sn-glycero-3-phosphocholine(out). The catalysed reaction is a 1,2-diacyl-sn-glycero-3-phosphoethanolamine(in) = a 1,2-diacyl-sn-glycero-3-phosphoethanolamine(out). It carries out the reaction a 1,2-diacyl-sn-glycerol(in) = a 1,2-diacyl-sn-glycerol(out). The enzyme catalyses a 1,2-diacyl-sn-glycero-3-phosphate(in) = a 1,2-diacyl-sn-glycero-3-phosphate(out). It catalyses the reaction a sphingomyelin(in) = a sphingomyelin(out). The catalysed reaction is a 1,2-diacyl-sn-glycero-3-phospho-(1'-sn-glycerol)(in) = a 1,2-diacyl-sn-glycero-3-phospho-(1'-sn-glycerol)(out). It carries out the reaction a 1,2-diacyl-sn-glycero-3-phospho-(1D-myo-inositol)(in) = a 1,2-diacyl-sn-glycero-3-phospho-(1D-myo-inositol)(out). The enzyme catalyses 1-hexadecanoyl-2-(5Z,8Z,11Z,14Z-eicosatetraenoyl)-sn-glycero-3-phosphoethanolamine(in) = 1-hexadecanoyl-2-(5Z,8Z,11Z,14Z-eicosatetraenoyl)-sn-glycero-3-phosphoethanolamine(out). It catalyses the reaction N-(hexadecanoyl)-sphing-4-enine-1-phosphocholine(in) = N-(hexadecanoyl)-sphing-4-enine-1-phosphocholine(out). The catalysed reaction is 1,2-dihexadecanoyl-sn-glycero-3-phosphocholine(in) = 1,2-dihexadecanoyl-sn-glycero-3-phosphocholine(out). Functionally, mediates the transfer of phospholipids and free cholesterol from triglyceride-rich lipoproteins (low density lipoproteins or LDL and very low density lipoproteins or VLDL) into high-density lipoproteins (HDL) as well as the exchange of phospholipids between triglyceride-rich lipoproteins themselves. Facilitates the transfer of a spectrum of different lipid molecules, including sphingomyelin, phosphatidylcholine, phosphatidylinositol, phosphatidylglycerol, and phosphatidyl ethanolamine. Plays an important role in HDL remodeling which involves modulating the size and composition of HDL. Also plays a key role in the uptake of cholesterol from peripheral cells and tissues that is subsequently transported to the liver for degradation and excretion. Two distinct forms of PLTP exist in plasma: an active form that can transfer phosphatidylcholine from phospholipid vesicles to HDL, and an inactive form that lacks this capability. This is Phospholipid transfer protein (Pltp) from Mus musculus (Mouse).